Here is a 160-residue protein sequence, read N- to C-terminus: Anaerobic nitrite reductase HBII (160 aa).

In terms of domain architecture, Globin spans G8–K157. The Homodimerization motif lies at E41–S45. S51, K65, H69, K99, S103, and H104 together coordinate heme b. A Homodimerization motif is present at residues D111–E123.

It belongs to the plant globin family. As to quaternary structure, homodimer. It depends on heme b as a cofactor.

The protein resides in the cytoplasm. The protein localises to the nucleus. It carries out the reaction Fe(III)-heme b-[protein] + nitric oxide + H2O = Fe(II)-heme b-[protein] + nitrite + 2 H(+). Functionally, phytoglobin that reduces nitrite to nitric oxide (NO) under anoxic conditions (e.g. during flooding or in waterlogged soil) and upon root nodulation. Required for general plant development and during nodulation, especially for the onset of symbiosis. Monitors nitric oxide (NO) levels during early phase of the nitrogen-fixing symbiosis and buffers oxygen in functioning nodules. May not function as an oxygen storage or transport protein. Has an unusually high affinity for O(2) through a hexacoordinate heme iron because of a very low dissociation constant. The protein is Anaerobic nitrite reductase HBII of Casuarina glauca (Swamp oak).